A 492-amino-acid chain; its full sequence is Glycerol kinase 1 (492 aa).

Position 10 (Thr-10) interacts with ADP. Residues Thr-10 and Ser-11 each contribute to the ATP site. Thr-10 is a sn-glycerol 3-phosphate binding site. Residue Lys-14 participates in ADP binding. Residues Arg-80, Glu-81, Tyr-132, and Asp-241 each contribute to the sn-glycerol 3-phosphate site. Positions 80, 81, 132, and 241 each coordinate glycerol. Positions 263, 306, 407, and 411 each coordinate ADP. Residues Thr-263, Gly-306, and Gly-407 each coordinate ATP.

Belongs to the FGGY kinase family.

The enzyme catalyses glycerol + ATP = sn-glycerol 3-phosphate + ADP + H(+). It participates in polyol metabolism; glycerol degradation via glycerol kinase pathway; sn-glycerol 3-phosphate from glycerol: step 1/1. Inhibited by fructose 1,6-bisphosphate (FBP). Key enzyme in the regulation of glycerol uptake and metabolism. Catalyzes the phosphorylation of glycerol to yield sn-glycerol 3-phosphate. This Thermotoga maritima (strain ATCC 43589 / DSM 3109 / JCM 10099 / NBRC 100826 / MSB8) protein is Glycerol kinase 1.